A 342-amino-acid chain; its full sequence is L-threonine 3-dehydrogenase (342 aa).

Cysteine 38 contributes to the Zn(2+) binding site. Residues threonine 40 and histidine 43 each act as charge relay system in the active site. Zn(2+) is bound by residues histidine 63, glutamate 64, cysteine 93, cysteine 96, cysteine 99, and cysteine 107. NAD(+) is bound by residues isoleucine 175, aspartate 195, arginine 200, 262–264 (LGI), and 286–287 (IY).

Belongs to the zinc-containing alcohol dehydrogenase family. As to quaternary structure, homotetramer. The cofactor is Zn(2+).

Its subcellular location is the cytoplasm. The catalysed reaction is L-threonine + NAD(+) = (2S)-2-amino-3-oxobutanoate + NADH + H(+). It functions in the pathway amino-acid degradation; L-threonine degradation via oxydo-reductase pathway; glycine from L-threonine: step 1/2. In terms of biological role, catalyzes the NAD(+)-dependent oxidation of L-threonine to 2-amino-3-ketobutyrate. In Aeromonas hydrophila subsp. hydrophila (strain ATCC 7966 / DSM 30187 / BCRC 13018 / CCUG 14551 / JCM 1027 / KCTC 2358 / NCIMB 9240 / NCTC 8049), this protein is L-threonine 3-dehydrogenase.